The chain runs to 941 residues: Protocadherin alpha-12 (941 aa).

Residues 1–29 (MVIIGPRGPGSQRLLLSLLLLAAWEVGSG) form the signal peptide. 6 consecutive Cadherin domains span residues 30 to 133 (QLHY…PPVF), 134 to 242 (RERE…GPAF), 243 to 350 (DKPS…VPEV), 351 to 455 (MVTS…APAF), 456 to 565 (AQPE…APAL), and 581 to 678 (VPRS…APKT). At 30-697 (QLHYSVYEEA…DPEAALVDIN (668 aa)) the chain is on the extracellular side. N-linked (GlcNAc...) asparagine glycans are attached at residues Asn-257 and Asn-265. The N-linked (GlcNAc...) asparagine glycan is linked to Asn-548. Residues 698–718 (VYLIIAICAVSSLLVLTLLLY) form a helical membrane-spanning segment. The Cytoplasmic portion of the chain corresponds to 719–941 (TALRCSAPPT…GNSTTDNSDQ (223 aa)). 5 PXXP repeats span residues 734-737 (PGKP), 790-793 (PRQP), 823-826 (PGGP), 863-866 (GPGN), and 882-885 (PGSP). Residues 734-885 (PGKPTLVCSS…PDKFIIPGSP (152 aa)) form a 5 X 4 AA repeats of P-X-X-P region. Positions 818-941 (ILRAGPGGPD…GNSTTDNSDQ (124 aa)) are disordered. Positions 900 to 914 (DKSDFITFGKKEETK) are enriched in basic and acidic residues.

The protein resides in the cell membrane. Potential calcium-dependent cell-adhesion protein. May be involved in the establishment and maintenance of specific neuronal connections in the brain. The sequence is that of Protocadherin alpha-12 (PCDHA12) from Homo sapiens (Human).